The sequence spans 267 residues: Probable E3 ubiquitin-protein ligase dma1 (267 aa).

The FHA domain occupies 60–116 (IYIGRYTERYNGGDVSAIVFRSKVVSRRHAQIFYENNTWYIQDMGSSSGTFLNHVRL). The RING-type zinc finger occupies 192–236 (CCICLMPVLPCQALFVAPCSHSYHYKCIRPTLNESHPYFSCFICR).

The protein belongs to the DMA1 family. Interacts with sid4.

It is found in the cytoplasm. The protein localises to the cytoskeleton. The protein resides in the microtubule organizing center. It localises to the spindle pole body. It carries out the reaction S-ubiquitinyl-[E2 ubiquitin-conjugating enzyme]-L-cysteine + [acceptor protein]-L-lysine = [E2 ubiquitin-conjugating enzyme]-L-cysteine + N(6)-ubiquitinyl-[acceptor protein]-L-lysine.. In terms of biological role, probable E3 ubiquitin-protein ligase which is a component of the spindle assembly checkpoint, required to prevent septum formation and premature exit from mitosis if spindle function is compromised. Inhibits the septation initiation netwok (SIN) during spindle checkpoint activation. The effect appears to be mediated through preventing the SIN activator, plo1 kinase, from localizing to the SPB. In Schizosaccharomyces pombe (strain 972 / ATCC 24843) (Fission yeast), this protein is Probable E3 ubiquitin-protein ligase dma1 (dma1).